Reading from the N-terminus, the 726-residue chain is Eukaryotic translation initiation factor 3 subunit B (726 aa).

The sufficient for interaction with HCR1 and TIF32 stretch occupies residues 1 to 94 (MSAALEDIKL…LFVECASPAD (94 aa)). The sufficient for interaction with PIC8 stretch occupies residues 1–219 (MSAALEDIKL…GVVMWGGPHF (219 aa)). The 84-residue stretch at 37–120 (QYIVVCGAPV…HRLFIYTMRD (84 aa)) folds into the RRM domain. WD repeat units follow at residues 142–182 (FPTS…EESV), 186–224 (RKNW…RLRR), 235–283 (VSPS…LQST), 331–374 (LKVP…MSCK), 442–485 (ELKD…FAPE), 505–549 (ITDK…TDKN), and 566–611 (NSFP…VKEE).

Belongs to the eIF-3 subunit B family. Component of the eukaryotic translation initiation factor 3 (eIF-3) complex.

It localises to the cytoplasm. Functionally, RNA-binding component of the eukaryotic translation initiation factor 3 (eIF-3) complex, which is involved in protein synthesis of a specialized repertoire of mRNAs and, together with other initiation factors, stimulates binding of mRNA and methionyl-tRNAi to the 40S ribosome. The eIF-3 complex specifically targets and initiates translation of a subset of mRNAs involved in cell proliferation. The polypeptide is Eukaryotic translation initiation factor 3 subunit B (Vanderwaltozyma polyspora (strain ATCC 22028 / DSM 70294 / BCRC 21397 / CBS 2163 / NBRC 10782 / NRRL Y-8283 / UCD 57-17) (Kluyveromyces polysporus)).